Reading from the N-terminus, the 542-residue chain is Probable spastin homolog spas-1 (542 aa).

The stretch at 29–66 forms a coiled coil; sequence RAAIEMDELTKQNGTINEKLQTAELYKQARQMLKEANE. Residues 131 to 177 are disordered; it reads ATVPGDKKVSKVKQTEKAPHVCSRGDRCGAHQPPPEKKSTPLKPVNQ. Over residues 135-169 the composition is skewed to basic and acidic residues; the sequence is GDKKVSKVKQTEKAPHVCSRGDRCGAHQPPPEKKS. 309–316 is a binding site for ATP; the sequence is GPPGNGKT.

It belongs to the AAA ATPase family. Spastin subfamily. Homohexamer. The homohexamer is stabilized by ATP-binding. The homohexamer may adopt a ring conformation through which microtubules pass prior to being severed. Interacts with microtubules.

Its subcellular location is the cytoplasm. It localises to the cytoskeleton. It is found in the perinuclear region. The catalysed reaction is n ATP + n H2O + a microtubule = n ADP + n phosphate + (n+1) alpha/beta tubulin heterodimers.. In terms of biological role, severs microtubules, probably in an ATP-dependent fashion. The sequence is that of Probable spastin homolog spas-1 (spas-1) from Caenorhabditis briggsae.